A 205-amino-acid polypeptide reads, in one-letter code: Guanylate kinase (205 aa).

Positions 5-183 constitute a Guanylate kinase-like domain; sequence GTLYTVSAPS…ALTEFRSIVV (179 aa). Position 12–19 (12–19) interacts with ATP; the sequence is APSGAGKT.

The protein belongs to the guanylate kinase family.

Its subcellular location is the cytoplasm. The enzyme catalyses GMP + ATP = GDP + ADP. Essential for recycling GMP and indirectly, cGMP. In Saccharophagus degradans (strain 2-40 / ATCC 43961 / DSM 17024), this protein is Guanylate kinase.